Consider the following 144-residue polypeptide: D-aminoacyl-tRNA deacylase (144 aa).

Residues 136–137 (GP) carry the Gly-cisPro motif, important for rejection of L-amino acids motif.

This sequence belongs to the DTD family. Homodimer.

It is found in the cytoplasm. It carries out the reaction glycyl-tRNA(Ala) + H2O = tRNA(Ala) + glycine + H(+). The catalysed reaction is a D-aminoacyl-tRNA + H2O = a tRNA + a D-alpha-amino acid + H(+). Functionally, an aminoacyl-tRNA editing enzyme that deacylates mischarged D-aminoacyl-tRNAs. Also deacylates mischarged glycyl-tRNA(Ala), protecting cells against glycine mischarging by AlaRS. Acts via tRNA-based rather than protein-based catalysis; rejects L-amino acids rather than detecting D-amino acids in the active site. By recycling D-aminoacyl-tRNA to D-amino acids and free tRNA molecules, this enzyme counteracts the toxicity associated with the formation of D-aminoacyl-tRNA entities in vivo and helps enforce protein L-homochirality. The chain is D-aminoacyl-tRNA deacylase from Corynebacterium efficiens (strain DSM 44549 / YS-314 / AJ 12310 / JCM 11189 / NBRC 100395).